The following is a 2883-amino-acid chain: Bifunctional DNA-directed RNA polymerase subunit beta-beta' (2883 aa).

A DNA-directed RNA polymerase subunit beta region spans residues 1-1377; it reads MPTTLKSGNR…DVTVYGETEE (1377 aa). Positions 1382–2883 are DNA-directed RNA polymerase subunit beta'; that stretch reads PMPIKEDDRP…IRIKEKTEGA (1502 aa). Positions 1447, 1449, 1462, and 1465 each coordinate Zn(2+). Asp-1846, Asp-1848, and Asp-1850 together coordinate Mg(2+). Zn(2+) is bound by residues Cys-2176, Cys-2250, Cys-2257, and Cys-2260.

In the N-terminal section; belongs to the RNA polymerase beta chain family. It in the C-terminal section; belongs to the RNA polymerase beta' chain family. In terms of assembly, the RNAP catalytic core consists of 2 alpha, 1 beta/beta' and 1 omega subunit. When a sigma factor is associated with the core the holoenzyme is formed, which can initiate transcription. Mg(2+) serves as cofactor. Zn(2+) is required as a cofactor.

The enzyme catalyses RNA(n) + a ribonucleoside 5'-triphosphate = RNA(n+1) + diphosphate. Its function is as follows. DNA-dependent RNA polymerase catalyzes the transcription of DNA into RNA using the four ribonucleoside triphosphates as substrates. The chain is Bifunctional DNA-directed RNA polymerase subunit beta-beta' (rpoBC) from Wolinella succinogenes (strain ATCC 29543 / DSM 1740 / CCUG 13145 / JCM 31913 / LMG 7466 / NCTC 11488 / FDC 602W) (Vibrio succinogenes).